A 425-amino-acid polypeptide reads, in one-letter code: Serine--tRNA ligase (425 aa).

233-235 (TAE) contacts L-serine. 264–266 (RAE) lines the ATP pocket. E287 provides a ligand contact to L-serine. 351-354 (EISS) is an ATP binding site. Residue S387 participates in L-serine binding.

The protein belongs to the class-II aminoacyl-tRNA synthetase family. Type-1 seryl-tRNA synthetase subfamily. Homodimer. The tRNA molecule binds across the dimer.

The protein localises to the cytoplasm. It carries out the reaction tRNA(Ser) + L-serine + ATP = L-seryl-tRNA(Ser) + AMP + diphosphate + H(+). The catalysed reaction is tRNA(Sec) + L-serine + ATP = L-seryl-tRNA(Sec) + AMP + diphosphate + H(+). It participates in aminoacyl-tRNA biosynthesis; selenocysteinyl-tRNA(Sec) biosynthesis; L-seryl-tRNA(Sec) from L-serine and tRNA(Sec): step 1/1. Catalyzes the attachment of serine to tRNA(Ser). Is also able to aminoacylate tRNA(Sec) with serine, to form the misacylated tRNA L-seryl-tRNA(Sec), which will be further converted into selenocysteinyl-tRNA(Sec). In Clostridium botulinum (strain Eklund 17B / Type B), this protein is Serine--tRNA ligase.